The following is a 467-amino-acid chain: Putative vacuolar protein sorting-associated protein TDA6 (467 aa).

Residues 8-28 traverse the membrane as a helical segment; sequence ILLWFLIVDLSVIRALVLPPL. N-linked (GlcNAc...) asparagine glycans are attached at residues asparagine 61, asparagine 124, and asparagine 141.

The protein belongs to the VPS62 family.

It is found in the membrane. Its function is as follows. Involved in vacuolar protein sorting. The chain is Putative vacuolar protein sorting-associated protein TDA6 (TDA6) from Saccharomyces cerevisiae (strain ATCC 204508 / S288c) (Baker's yeast).